The chain runs to 431 residues: Tryptophan synthase beta chain 2 (431 aa).

Position 111 is an N6-(pyridoxal phosphate)lysine (Lys111).

It belongs to the TrpB family. In terms of assembly, tetramer of two alpha and two beta chains. Pyridoxal 5'-phosphate serves as cofactor.

The enzyme catalyses (1S,2R)-1-C-(indol-3-yl)glycerol 3-phosphate + L-serine = D-glyceraldehyde 3-phosphate + L-tryptophan + H2O. Its pathway is amino-acid biosynthesis; L-tryptophan biosynthesis; L-tryptophan from chorismate: step 5/5. In terms of biological role, the beta subunit is responsible for the synthesis of L-tryptophan from indole and L-serine. This Sulfurisphaera tokodaii (strain DSM 16993 / JCM 10545 / NBRC 100140 / 7) (Sulfolobus tokodaii) protein is Tryptophan synthase beta chain 2 (trpB2).